The following is a 210-amino-acid chain: Somatotropin (210 aa).

Positions 1 to 23 are cleaved as a signal peptide; the sequence is MARVLVLLSVVLVSLLVNQGRAS. A Zn(2+)-binding site is contributed by histidine 38. Cysteine 71 and cysteine 183 are disulfide-bonded. Position 192 (glutamate 192) interacts with Zn(2+). The cysteines at positions 200 and 208 are disulfide-linked.

The protein belongs to the somatotropin/prolactin family.

Its subcellular location is the secreted. Functionally, growth hormone plays an important role in growth control. The chain is Somatotropin (gh) from Cyprinus carpio (Common carp).